A 73-amino-acid chain; its full sequence is UPF0154 protein LJ_1506 (73 aa).

A helical membrane pass occupies residues 3–23 (LGLAIFLIIIALLIGLVGGFY).

Belongs to the UPF0154 family.

It localises to the cell membrane. The sequence is that of UPF0154 protein LJ_1506 from Lactobacillus johnsonii (strain CNCM I-12250 / La1 / NCC 533).